We begin with the raw amino-acid sequence, 523 residues long: MAAIRDYKTALDFTKSLPRPDGLSVQELMDSKIRGGLTYNDFLILPGLVDFASSEVSLQTKLTRNITLNIPLVSSPMDTVTESEMATFMALLGGIGFIHHNCTPEDQADMVRRVKNYENGFINNPIVISPTTTVGEAKSMKEKYGFAGFPVTTDGKRNAKLVGVITSRDIQFVEDNSLLVQDVMTKNPVTGAQGITLSEGNEILKKIKKGRLLVVDEKGNLVSMLSRTDLMKNQNYPLASKSANTKQLLCGASIGTMDADKERLRLLVKAGLDVVILDSSQGNSIFELNMLKWVKESFPGLEVIAGNVVTREQAANLIAAGADGLRIGMGTGSICITQEVMACGRPQGTAVYNVCEFANQFGVPCMADGGVQNIGHITKALALGSSTVMMGGMLAGTTESPGEYFYQDGKRLKAYRGMGSIDAMQKTGTKGNASTSRYFSESDSVLVAQGVSGAVVDKGSIKKFIPYLYNGLQHSCQDIGCRSLTLLKNNVQRGKVRFEFRTASAQLEGGVHNLHSYEKRLHN.

CBS domains are found at residues 121 to 183 and 184 to 240; these read FINN…VQDV and MTKN…PLAS. NAD(+)-binding positions include 278-280 and 328-330; these read DSS and GMG. Residues Gly-330 and Gly-332 each coordinate K(+). Ser-333 lines the IMP pocket. K(+) is bound at residue Cys-335. Cys-335 functions as the Thioimidate intermediate in the catalytic mechanism. IMP contacts are provided by residues 368 to 370, 391 to 392, and 415 to 419; these read DGG, GG, and YRGMG. Catalysis depends on Arg-437, which acts as the Proton acceptor. Residue Gln-449 participates in IMP binding. Residues Glu-508, Gly-509, and Gly-510 each contribute to the K(+) site.

The protein belongs to the IMPDH/GMPR family. In terms of assembly, homotetramer. Seems to be able to form heterotetramers composed from more than 1 of the 3 IMPDH gene products (IMD2-4). The cofactor is K(+).

Its subcellular location is the cytoplasm. It carries out the reaction IMP + NAD(+) + H2O = XMP + NADH + H(+). The protein operates within purine metabolism; XMP biosynthesis via de novo pathway; XMP from IMP: step 1/1. Its activity is regulated as follows. Mycophenolic acid (MPA) is a non-competitive inhibitor that prevents formation of the closed enzyme conformation by binding to the same site as the amobile flap. In contrast, mizoribine monophosphate (MZP) is a competitive inhibitor that induces the closed conformation. MPA is a potent inhibitor of mammalian IMPDHs but a poor inhibitor of the bacterial enzymes. MZP is a more potent inhibitor of bacterial IMPDH. Catalyzes the conversion of inosine 5'-phosphate (IMP) to xanthosine 5'-phosphate (XMP), the first committed and rate-limiting step in the de novo synthesis of guanine nucleotides, and therefore plays an important role in the regulation of cell growth. In contrast to the other IMPDH alleles IMD3 and IMD4, the enzymatic activity of IMD2 seems to be intrinsically drug resistant. This is Inosine-5'-monophosphate dehydrogenase 2 from Saccharomyces cerevisiae (strain ATCC 204508 / S288c) (Baker's yeast).